The sequence spans 1320 residues: Sal-like protein 3 (1320 aa).

The segment covering 1–11 (MSRRKQAKPQH) has biased composition (basic residues). A disordered region spans residues 1–49 (MSRRKQAKPQHLKSDEELPPQDGASEHGVPGDGAEDADSGSESRSGSEE). Residues 40–49 (GSESRSGSEE) are compositionally biased toward low complexity. The segment at 51–73 (SVCEKCCAEFFKWADFLQHKKTC) adopts a C2H2-type 1; atypical zinc-finger fold. Disordered stretches follow at residues 84–166 (DDEP…AFSM) and 271–367 (LSAG…NLPN). Residues 88–100 (APPSEDFPEPSPA) show a composition bias toward pro residues. Serine 109 bears the Phosphoserine mark. Positions 121 to 131 (SEVKAATKEAE) are enriched in basic and acidic residues. The span at 143-160 (PPGPSVPPPPPALPPQPE) shows a compositional bias: pro residues. Positions 271–289 (LSAGPATASAGSGSTLPAA) are enriched in low complexity. Polar residues predominate over residues 295–311 (HLSQPASGTSTPCSTSA). 2 stretches are compositionally biased toward low complexity: residues 323–342 (STGPAPGAVAAASSTVGNAV) and 355–367 (PGPLLSSASNLPN). C2H2-type zinc fingers lie at residues 427-449 (HKCRFCAKVFGSDSALQIHLRSH) and 455-477 (FKCNICGNRFSTKGNLKVHFQRH). A disordered region spans residues 534 to 623 (GLQLPPTVPG…RTGDAPVVGG (90 aa)). Polar residues predominate over residues 543-554 (GTHNYTDSPSIT). Positions 555-568 (PVSRSPQRPSPASS) are enriched in low complexity. Residues 569 to 583 (ECTSLSPGLNNTESG) show a composition bias toward polar residues. 3 consecutive C2H2-type zinc fingers follow at residues 692-714 (NQCVICHRVLSCQSALKMHYRTH), 720-742 (FKCKICGRAFTTKGNLKTHFGVH), and 752-774 (HSCPICQKKFTNAVVLQQHIRMH). Disordered regions lie at residues 807 to 846 (SSFDDDIDENSMEEDSELKDTASDSSKPLLSYSGSCPPSP) and 878 to 972 (VENG…GHPG). Residues 809-823 (FDDDIDENSMEEDSE) show a composition bias toward acidic residues. Composition is skewed to low complexity over residues 834-846 (PLLSYSGSCPPSP) and 902-923 (RSAGSPALSESSSSQALSPAHS). Serine 932 carries the phosphoserine modification. 4 C2H2-type zinc fingers span residues 997–1019 (TVCGVCGKPFACKSALEIHYRSH), 1025–1047 (FVCTVCRRGCSTMGNLKQHLLTH), 1133–1155 (HNCQSCGKTFSSASALQIHERTH), and 1161–1183 (FGCTICGRAFTTKGNLKVHMGTH). The residue at position 1197 (serine 1197) is a Phosphoserine.

This sequence belongs to the sal C2H2-type zinc-finger protein family. In adult brain, testis and kidney. In lower levels also in adult ovaries and embryonic stem cells. In embryo in developing neuroectoderm of brain, inner ear and spinal cord. Also weakly and transiently expressed in embryonic branchial arches, notochord, limb buds and heart.

The protein localises to the nucleus. Its function is as follows. Probable transcription factor. This chain is Sal-like protein 3 (Sall3), found in Mus musculus (Mouse).